The primary structure comprises 83 residues: Small ribosomal subunit protein bS18 (83 aa).

Belongs to the bacterial ribosomal protein bS18 family. As to quaternary structure, part of the 30S ribosomal subunit. Forms a tight heterodimer with protein bS6.

Functionally, binds as a heterodimer with protein bS6 to the central domain of the 16S rRNA, where it helps stabilize the platform of the 30S subunit. This is Small ribosomal subunit protein bS18 from Tropheryma whipplei (strain TW08/27) (Whipple's bacillus).